Consider the following 347-residue polypeptide: GDT1-like protein 2, chloroplastic (347 aa).

The transit peptide at 1–12 directs the protein to the chloroplast; sequence MATAISVGVAVP. The interval 70–97 is disordered; the sequence is EAGSHGEHLDSSATRDSNKPTKPPSGSR. Transmembrane regions (helical) follow at residues 99-119, 124-144, 165-185, 196-216, 257-277, 299-319, and 327-347; these read PQSI…IVFF, SAVV…LIFV, ALVL…SVII, FQTT…FFGF, LTSP…AEWG, GAIA…AFLA, and VGLI…FGVF.

The protein belongs to the GDT1 family.

The protein localises to the plastid. Its subcellular location is the chloroplast membrane. The protein is GDT1-like protein 2, chloroplastic of Oryza sativa subsp. japonica (Rice).